Consider the following 260-residue polypeptide: ATP synthase subunit a (260 aa).

7 consecutive transmembrane segments (helical) span residues 29–49 (FSFTNSSLFMLLTLSFFLLLI), 95–115 (FFPCILVTFLFLLFCNLQGMI), 124–144 (HFLITLALSFSIFIGITIVGF), 151–171 (FFSFLLPAGVPLPLAPFLVLL), 191–211 (MMAGHSLVKILSGFAWTMLCM), 213–233 (EIFYFIGALGPLFIVLALTGL), and 237–257 (VAILQAYVFTILICIYLNDAI).

The protein belongs to the ATPase A chain family. F-type ATPases have 2 components, CF(1) - the catalytic core - and CF(0) - the membrane proton channel. CF(1) has five subunits: alpha(3), beta(3), gamma(1), delta(1), epsilon(1). CF(0) has three main subunits: a, b and c.

It localises to the mitochondrion inner membrane. In terms of biological role, mitochondrial membrane ATP synthase (F(1)F(0) ATP synthase or Complex V) produces ATP from ADP in the presence of a proton gradient across the membrane which is generated by electron transport complexes of the respiratory chain. F-type ATPases consist of two structural domains, F(1) - containing the extramembraneous catalytic core and F(0) - containing the membrane proton channel, linked together by a central stalk and a peripheral stalk. During catalysis, ATP synthesis in the catalytic domain of F(1) is coupled via a rotary mechanism of the central stalk subunits to proton translocation. Key component of the proton channel; it may play a direct role in the translocation of protons across the membrane. This is ATP synthase subunit a (ATP6) from Brassica napus (Rape).